The chain runs to 295 residues: Putative 23S rRNA (guanine-N(1)-)-methyltransferase (295 aa).

The Zn(2+) site is built by cysteine 11, cysteine 14, cysteine 31, and histidine 35. Residues tyrosine 74, 116-117 (TG), and histidine 204 each bind S-adenosyl-L-methionine.

It belongs to the methyltransferase superfamily. RlmA family.

Functionally, confers strong resistance to mycinamicin (MM) and tylosin (TY). May function as methyltransferase. The sequence is that of Putative 23S rRNA (guanine-N(1)-)-methyltransferase (myrA) from Micromonospora griseorubida.